A 169-amino-acid chain; its full sequence is Sorting nexin-24 (169 aa).

An N-acetylmethionine modification is found at Met-1. The region spanning 1-125 (MEVYIPSFRY…SFDETESEES (125 aa)) is the PX domain. A 1,2-diacyl-sn-glycero-3-phospho-(1D-myo-inositol-3-phosphate) contacts are provided by Arg-38, Ser-40, Lys-61, and Arg-74. Residues Ser-113 and Ser-116 each carry the phosphoserine modification.

The protein belongs to the sorting nexin family.

The protein resides in the cytoplasmic vesicle membrane. Functionally, may be involved in several stages of intracellular trafficking. The chain is Sorting nexin-24 (SNX24) from Homo sapiens (Human).